A 217-amino-acid polypeptide reads, in one-letter code: Adenylate kinase (217 aa).

ATP is bound at residue 10-15 (GAGKGT). Positions 30-59 (STGDMFRAAMKEETDLGLEAKSYIDKGELV) are NMP. Residues T31, R36, 57-59 (ELV), 85-88 (GFPR), and Q92 contribute to the AMP site. An LID region spans residues 126-163 (GRRICKNCGATYHLVFNPPAKENVCDKCGGELYQREDD). R127 contributes to the ATP binding site. C130 and C133 together coordinate Zn(2+). 136-137 (TY) provides a ligand contact to ATP. Zn(2+) contacts are provided by C150 and C153. R160 and R171 together coordinate AMP. K199 is an ATP binding site.

The protein belongs to the adenylate kinase family. In terms of assembly, monomer.

It localises to the cytoplasm. It carries out the reaction AMP + ATP = 2 ADP. Its pathway is purine metabolism; AMP biosynthesis via salvage pathway; AMP from ADP: step 1/1. Functionally, catalyzes the reversible transfer of the terminal phosphate group between ATP and AMP. Plays an important role in cellular energy homeostasis and in adenine nucleotide metabolism. This is Adenylate kinase from Bacillus licheniformis (strain ATCC 14580 / DSM 13 / JCM 2505 / CCUG 7422 / NBRC 12200 / NCIMB 9375 / NCTC 10341 / NRRL NRS-1264 / Gibson 46).